A 456-amino-acid chain; its full sequence is Exodeoxyribonuclease 7 large subunit (456 aa).

This sequence belongs to the XseA family. As to quaternary structure, heterooligomer composed of large and small subunits.

It is found in the cytoplasm. It catalyses the reaction Exonucleolytic cleavage in either 5'- to 3'- or 3'- to 5'-direction to yield nucleoside 5'-phosphates.. Its function is as follows. Bidirectionally degrades single-stranded DNA into large acid-insoluble oligonucleotides, which are then degraded further into small acid-soluble oligonucleotides. This chain is Exodeoxyribonuclease 7 large subunit, found in Shigella boydii serotype 4 (strain Sb227).